The primary structure comprises 115 residues: Ribonuclease P protein component (115 aa).

The protein belongs to the RnpA family. As to quaternary structure, consists of a catalytic RNA component (M1 or rnpB) and a protein subunit.

The enzyme catalyses Endonucleolytic cleavage of RNA, removing 5'-extranucleotides from tRNA precursor.. Functionally, RNaseP catalyzes the removal of the 5'-leader sequence from pre-tRNA to produce the mature 5'-terminus. It can also cleave other RNA substrates such as 4.5S RNA. The protein component plays an auxiliary but essential role in vivo by binding to the 5'-leader sequence and broadening the substrate specificity of the ribozyme. The polypeptide is Ribonuclease P protein component (Macrococcus caseolyticus (strain JCSC5402) (Macrococcoides caseolyticum)).